Consider the following 201-residue polypeptide: 3-isopropylmalate dehydratase small subunit (201 aa).

The protein belongs to the LeuD family. LeuD type 1 subfamily. Heterodimer of LeuC and LeuD.

The enzyme catalyses (2R,3S)-3-isopropylmalate = (2S)-2-isopropylmalate. Its pathway is amino-acid biosynthesis; L-leucine biosynthesis; L-leucine from 3-methyl-2-oxobutanoate: step 2/4. Functionally, catalyzes the isomerization between 2-isopropylmalate and 3-isopropylmalate, via the formation of 2-isopropylmaleate. The protein is 3-isopropylmalate dehydratase small subunit of Shewanella baltica (strain OS155 / ATCC BAA-1091).